We begin with the raw amino-acid sequence, 320 residues long: Glucokinase (320 aa).

An ATP-binding site is contributed by 12–17 (GDIGGT).

It belongs to the bacterial glucokinase family.

It localises to the cytoplasm. The catalysed reaction is D-glucose + ATP = D-glucose 6-phosphate + ADP + H(+). In Nitrobacter hamburgensis (strain DSM 10229 / NCIMB 13809 / X14), this protein is Glucokinase.